The chain runs to 790 residues: MKRVLIPGVILCGADVAQAVDDKNMYMHFFEEMTVYAPVPVPVNGNTHYTSESIERLPTGNGNISDLLRTNPAVRMDSTQSTSLNQGDIRPEKISIHGASPYQNAYLIDGISATNNLNPANESDASSATNISGMSQGYYLDVSLLDNVTLYDSFVPVEFGRFNGGVIDAKIKRFNADDSKVKLGYRTTRSDWLTSHIDENNKSAFNQGSSGSTYYSPDFKKNFYTLSFNQELADNFGVTAGLSRRQSDITRADYVSNDGIVAGRAQYKNVIDTALSKFTWFASDRFTHDLTLKYTGSSRDYNTSTFPQSDREMGNKSYGLAWDMDTQLAWAKLRTTVGWDHISDYTRHDHDIWYTELSCTYGDITGRCTRGGLGHISQAVDNYTFKTRLDWQKFAVGNVSHQPYFGAEYIYSDAWTERHNQSESYVINAAGKKTNHTIYHKGKGRLGIDNYTLYMADRISWRNVSLMPGVRYDYDNYLSNHNISPRFMTEWDIFANQTSMITAGYNRYYGGNILDMGLRDIRNSWTESVSGNKTLTRYQDLKTPYNDELAMGLQQKIGKNVIARANYVYREAHDQISKSSRTDSATKTTITEYNNDGKTKTHSFSLSFELAEPLHIRQVDINPQIVFSYIKSKGNLSLNNGYEESNTGDNQVVYNGNLVSYDSVPVADFNNPLKISLNMDFTHQPSGLVWANTLAWQEARKARIILGKTNAQYISEYSDYKQYVDEKLDSSLTWDTRLSWTPQFLQQQNLTISADILNVLDSKTAVDTTNTGVATYASGRTFWLDVSMKF.

The TBDR plug domain maps to 37–172 (APVPVPVNGN…NGGVIDAKIK (136 aa)). Residues 178–790 (DSKVKLGYRT…TFWLDVSMKF (613 aa)) form the TBDR beta-barrel domain.

This sequence belongs to the TonB-dependent receptor family.

It is found in the cell outer membrane. This is an uncharacterized protein from Escherichia coli (strain K12).